Consider the following 326-residue polypeptide: Malate dehydrogenase (326 aa).

An NAD(+)-binding site is contributed by 12-18; the sequence is GGTGQIA. Residues Arg93 and Arg99 each contribute to the substrate site. Residues Asn106, Gln113, and 130-132 contribute to the NAD(+) site; that span reads VGN. Positions 132 and 163 each coordinate substrate. Catalysis depends on His188, which acts as the Proton acceptor.

It belongs to the LDH/MDH superfamily. MDH type 2 family.

It carries out the reaction (S)-malate + NAD(+) = oxaloacetate + NADH + H(+). Catalyzes the reversible oxidation of malate to oxaloacetate. The protein is Malate dehydrogenase of Chlamydia trachomatis serovar L2 (strain ATCC VR-902B / DSM 19102 / 434/Bu).